Reading from the N-terminus, the 346-residue chain is Heterogeneous nuclear ribonucleoprotein A1 (346 aa).

RRM domains lie at 23-123 and 114-191; these read RKIF…GVRE and KRLY…KGLS. Composition is skewed to basic and acidic residues over residues 92–107 and 189–215; these read TVDP…KNRS and GLSK…RDGQ. 2 disordered regions span residues 92-111 and 189-346; these read TVDP…ESNV and GLSK…NRNY. Gly residues-rich tracts occupy residues 216–296 and 303–331; these read RGGY…GWGG and GGWG…GGQS. Residues 332–346 are compositionally biased toward low complexity; the sequence is GAQQWAHAQGGNRNY.

The protein resides in the nucleus. The protein localises to the chromosome. It localises to the telomere. This protein is a component of ribonucleosomes. Overexpression gradually increases telomere length, leading to increase lifespan. This chain is Heterogeneous nuclear ribonucleoprotein A1, found in Caenorhabditis elegans.